A 481-amino-acid polypeptide reads, in one-letter code: Aspartyl/glutamyl-tRNA(Asn/Gln) amidotransferase subunit B (481 aa).

The protein belongs to the GatB/GatE family. GatB subfamily. As to quaternary structure, heterotrimer of A, B and C subunits.

It carries out the reaction L-glutamyl-tRNA(Gln) + L-glutamine + ATP + H2O = L-glutaminyl-tRNA(Gln) + L-glutamate + ADP + phosphate + H(+). The enzyme catalyses L-aspartyl-tRNA(Asn) + L-glutamine + ATP + H2O = L-asparaginyl-tRNA(Asn) + L-glutamate + ADP + phosphate + 2 H(+). Its function is as follows. Allows the formation of correctly charged Asn-tRNA(Asn) or Gln-tRNA(Gln) through the transamidation of misacylated Asp-tRNA(Asn) or Glu-tRNA(Gln) in organisms which lack either or both of asparaginyl-tRNA or glutaminyl-tRNA synthetases. The reaction takes place in the presence of glutamine and ATP through an activated phospho-Asp-tRNA(Asn) or phospho-Glu-tRNA(Gln). The chain is Aspartyl/glutamyl-tRNA(Asn/Gln) amidotransferase subunit B from Pseudomonas fluorescens (strain ATCC BAA-477 / NRRL B-23932 / Pf-5).